We begin with the raw amino-acid sequence, 331 residues long: Adenosine deaminase (331 aa).

2 residues coordinate Zn(2+): histidine 12 and histidine 14. Substrate contacts are provided by histidine 14, aspartate 16, and glycine 170. Histidine 197 provides a ligand contact to Zn(2+). Catalysis depends on glutamate 200, which acts as the Proton donor. Aspartate 278 is a Zn(2+) binding site. Position 279 (aspartate 279) interacts with substrate.

The protein belongs to the metallo-dependent hydrolases superfamily. Adenosine and AMP deaminases family. Adenosine deaminase subfamily. Requires Zn(2+) as cofactor.

The enzyme catalyses adenosine + H2O + H(+) = inosine + NH4(+). It carries out the reaction 2'-deoxyadenosine + H2O + H(+) = 2'-deoxyinosine + NH4(+). Catalyzes the hydrolytic deamination of adenosine and 2-deoxyadenosine. In Shewanella baltica (strain OS155 / ATCC BAA-1091), this protein is Adenosine deaminase.